The following is a 53-amino-acid chain: ATP synthase protein 8 (53 aa).

The chain crosses the membrane as a helical span at residues 5 to 25 (APISWLTLFFVFSITLVIFNI).

It belongs to the ATPase protein 8 family. In terms of assembly, F-type ATPases have 2 components, CF(1) - the catalytic core - and CF(0) - the membrane proton channel.

The protein resides in the mitochondrion membrane. Functionally, mitochondrial membrane ATP synthase (F(1)F(O) ATP synthase or Complex V) produces ATP from ADP in the presence of a proton gradient across the membrane which is generated by electron transport complexes of the respiratory chain. F-type ATPases consist of two structural domains, F(1) - containing the extramembraneous catalytic core and F(0) - containing the membrane proton channel, linked together by a central stalk and a peripheral stalk. During catalysis, ATP synthesis in the catalytic domain of F(1) is coupled via a rotary mechanism of the central stalk subunits to proton translocation. Part of the complex F(0) domain. Minor subunit located with subunit a in the membrane. This chain is ATP synthase protein 8, found in Aedes aegypti (Yellowfever mosquito).